A 155-amino-acid chain; its full sequence is RNA pyrophosphohydrolase (155 aa).

A Nudix hydrolase domain is found at 5–147 (KYRPNVAAII…KRQVYRQVIA (143 aa)). Residues 42–63 (GGIDEGETPLEALHRELLEEIG) carry the Nudix box motif.

This sequence belongs to the Nudix hydrolase family. RppH subfamily. The cofactor is a divalent metal cation.

In terms of biological role, accelerates the degradation of transcripts by removing pyrophosphate from the 5'-end of triphosphorylated RNA, leading to a more labile monophosphorylated state that can stimulate subsequent ribonuclease cleavage. This Helicobacter pylori (strain ATCC 700392 / 26695) (Campylobacter pylori) protein is RNA pyrophosphohydrolase.